The primary structure comprises 396 residues: Elongation factor Tu 2 (396 aa).

The tr-type G domain maps to lysine 10–glutamate 206. Positions glycine 19–threonine 26 are G1. Glycine 19 to threonine 26 contacts GTP. Threonine 26 contacts Mg(2+). Residues glycine 60 to alanine 64 are G2. The G3 stretch occupies residues aspartate 81 to glycine 84. Residues aspartate 81–histidine 85 and asparagine 136–aspartate 139 contribute to the GTP site. The interval asparagine 136–aspartate 139 is G4. The G5 stretch occupies residues serine 174 to leucine 176.

The protein belongs to the TRAFAC class translation factor GTPase superfamily. Classic translation factor GTPase family. EF-Tu/EF-1A subfamily. In terms of assembly, monomer.

Its subcellular location is the cytoplasm. The enzyme catalyses GTP + H2O = GDP + phosphate + H(+). Functionally, GTP hydrolase that promotes the GTP-dependent binding of aminoacyl-tRNA to the A-site of ribosomes during protein biosynthesis. This chain is Elongation factor Tu 2, found in Desulfotalea psychrophila (strain LSv54 / DSM 12343).